A 126-amino-acid chain; its full sequence is Small ribosomal subunit protein uS13 (126 aa).

The tract at residues 99 to 126 is disordered; that stretch reads LRGQSTKNNARTRKGKKKTVANKKKATK. Positions 108 to 126 are enriched in basic residues; that stretch reads ARTRKGKKKTVANKKKATK.

Belongs to the universal ribosomal protein uS13 family. In terms of assembly, part of the 30S ribosomal subunit. Forms a loose heterodimer with protein S19. Forms two bridges to the 50S subunit in the 70S ribosome.

Its function is as follows. Located at the top of the head of the 30S subunit, it contacts several helices of the 16S rRNA. In the 70S ribosome it contacts the 23S rRNA (bridge B1a) and protein L5 of the 50S subunit (bridge B1b), connecting the 2 subunits; these bridges are implicated in subunit movement. Contacts the tRNAs in the A and P-sites. This is Small ribosomal subunit protein uS13 from Porphyromonas gingivalis (strain ATCC 33277 / DSM 20709 / CIP 103683 / JCM 12257 / NCTC 11834 / 2561).